A 101-amino-acid polypeptide reads, in one-letter code: YEQCIAHYESPEAAVAVVHALPRINRMVLCYLIRFLQVFVQPANVAITKMDVSNLAMVMAPNCLRCQSDDPRVIFENTRKEMSFLRVLIQHLDTSFMEGVL.

In terms of domain architecture, Rho-GAP spans 1-96; that stretch reads YEQCIAHYES…VLIQHLDTSF (96 aa).

Preoptic area and testis.

This Rattus norvegicus (Rat) protein is Rho GTPase-activating protein 39 (Arhgap39).